The sequence spans 499 residues: Aspartyl/glutamyl-tRNA(Asn/Gln) amidotransferase subunit B (499 aa).

Belongs to the GatB/GatE family. GatB subfamily. As to quaternary structure, heterotrimer of A, B and C subunits.

The catalysed reaction is L-glutamyl-tRNA(Gln) + L-glutamine + ATP + H2O = L-glutaminyl-tRNA(Gln) + L-glutamate + ADP + phosphate + H(+). It catalyses the reaction L-aspartyl-tRNA(Asn) + L-glutamine + ATP + H2O = L-asparaginyl-tRNA(Asn) + L-glutamate + ADP + phosphate + 2 H(+). Its function is as follows. Allows the formation of correctly charged Asn-tRNA(Asn) or Gln-tRNA(Gln) through the transamidation of misacylated Asp-tRNA(Asn) or Glu-tRNA(Gln) in organisms which lack either or both of asparaginyl-tRNA or glutaminyl-tRNA synthetases. The reaction takes place in the presence of glutamine and ATP through an activated phospho-Asp-tRNA(Asn) or phospho-Glu-tRNA(Gln). This chain is Aspartyl/glutamyl-tRNA(Asn/Gln) amidotransferase subunit B, found in Salinispora tropica (strain ATCC BAA-916 / DSM 44818 / JCM 13857 / NBRC 105044 / CNB-440).